The following is a 409-amino-acid chain: Dual-specificity RNA methyltransferase RlmN (409 aa).

The active-site Proton acceptor is the glutamate 117. The 250-residue stretch at 128–377 folds into the Radical SAM core domain; sequence LNGRKTLCIS…CTIRQTRGDD (250 aa). Cysteines 135 and 382 form a disulfide. Residues cysteine 142, cysteine 146, and cysteine 149 each contribute to the [4Fe-4S] cluster site. Residues 205-206, serine 237, 259-261, and asparagine 339 contribute to the S-adenosyl-L-methionine site; these read GE and SLH. The S-methylcysteine intermediate role is filled by cysteine 382.

This sequence belongs to the radical SAM superfamily. RlmN family. It depends on [4Fe-4S] cluster as a cofactor.

The protein localises to the cytoplasm. It carries out the reaction adenosine(2503) in 23S rRNA + 2 reduced [2Fe-2S]-[ferredoxin] + 2 S-adenosyl-L-methionine = 2-methyladenosine(2503) in 23S rRNA + 5'-deoxyadenosine + L-methionine + 2 oxidized [2Fe-2S]-[ferredoxin] + S-adenosyl-L-homocysteine. It catalyses the reaction adenosine(37) in tRNA + 2 reduced [2Fe-2S]-[ferredoxin] + 2 S-adenosyl-L-methionine = 2-methyladenosine(37) in tRNA + 5'-deoxyadenosine + L-methionine + 2 oxidized [2Fe-2S]-[ferredoxin] + S-adenosyl-L-homocysteine. Specifically methylates position 2 of adenine 2503 in 23S rRNA and position 2 of adenine 37 in tRNAs. m2A2503 modification seems to play a crucial role in the proofreading step occurring at the peptidyl transferase center and thus would serve to optimize ribosomal fidelity. The chain is Dual-specificity RNA methyltransferase RlmN from Psychrobacter arcticus (strain DSM 17307 / VKM B-2377 / 273-4).